A 429-amino-acid polypeptide reads, in one-letter code: Adenylosuccinate synthetase (429 aa).

GTP-binding positions include 12 to 18 (GDEGKGK) and 40 to 42 (GHT). Catalysis depends on Asp-13, which acts as the Proton acceptor. Mg(2+) is bound by residues Asp-13 and Gly-40. Residues 13-16 (DEGK), 38-41 (NAGH), Thr-128, Arg-142, Gln-223, Thr-238, and Arg-302 contribute to the IMP site. The active-site Proton donor is the His-41. A substrate-binding site is contributed by 298-304 (VNTGRPR). GTP contacts are provided by residues Arg-304, 330–332 (KLD), and 412–414 (GVG).

This sequence belongs to the adenylosuccinate synthetase family. As to quaternary structure, homodimer. It depends on Mg(2+) as a cofactor.

It localises to the cytoplasm. The catalysed reaction is IMP + L-aspartate + GTP = N(6)-(1,2-dicarboxyethyl)-AMP + GDP + phosphate + 2 H(+). It functions in the pathway purine metabolism; AMP biosynthesis via de novo pathway; AMP from IMP: step 1/2. Plays an important role in the de novo pathway of purine nucleotide biosynthesis. Catalyzes the first committed step in the biosynthesis of AMP from IMP. This is Adenylosuccinate synthetase from Arthrobacter sp. (strain FB24).